The chain runs to 84 residues: UPF0386 protein NGR_c10980 (84 aa).

Belongs to the UPF0386 family.

This is UPF0386 protein NGR_c10980 from Sinorhizobium fredii (strain NBRC 101917 / NGR234).